A 364-amino-acid polypeptide reads, in one-letter code: MQGKEILKQLSPYKQGKQIKDIQKDYQLDYIVKLASNENPYGYSKQVNEALSTENFDFHIYPDGYTSDLRTDLTQKLNIDESEIIFGSGSEEIIQLLCRSYIIPGSNVVMATPTFPQYKHYSLIENAEIKEIPTDKEGYHQLDKMLGSIDDHTAIVWLCTPNNPTGAAFSKEELITFLDNCPKEVLVVLDEAYYEYLHSDKDLDALQLRFTYSNVIVLRTFSKAYGLAGLRIGYGIANSTIIETLDKVRGPFNTNSVAQKAASYALKDQEFIQHTNQENYKNLTEFQHFLQRLGWGYYDSEANFLLVKTPISGMDVYEYLLRFGFIVRPGELLGIPKTVRVTIGKEQDMKELQKVLEQFDHELG.

At K223 the chain carries N6-(pyridoxal phosphate)lysine.

This sequence belongs to the class-II pyridoxal-phosphate-dependent aminotransferase family. Histidinol-phosphate aminotransferase subfamily. As to quaternary structure, homodimer. Requires pyridoxal 5'-phosphate as cofactor.

The catalysed reaction is L-histidinol phosphate + 2-oxoglutarate = 3-(imidazol-4-yl)-2-oxopropyl phosphate + L-glutamate. The protein operates within amino-acid biosynthesis; L-histidine biosynthesis; L-histidine from 5-phospho-alpha-D-ribose 1-diphosphate: step 7/9. The protein is Histidinol-phosphate aminotransferase 2 (hisC2) of Oceanobacillus iheyensis (strain DSM 14371 / CIP 107618 / JCM 11309 / KCTC 3954 / HTE831).